A 491-amino-acid chain; its full sequence is Bifunctional protein HldE (491 aa).

The interval 1–330 (MDRKMVESLF…AAVSLEHRDS (330 aa)) is ribokinase. Position 205 to 208 (205 to 208 (NRKE)) interacts with ATP. Aspartate 275 is an active-site residue. The tract at residues 356–491 (FTNGCFDLLH…KVLERYTDEQ (136 aa)) is cytidylyltransferase.

In the N-terminal section; belongs to the carbohydrate kinase PfkB family. It in the C-terminal section; belongs to the cytidylyltransferase family. In terms of assembly, homodimer.

It catalyses the reaction D-glycero-beta-D-manno-heptose 7-phosphate + ATP = D-glycero-beta-D-manno-heptose 1,7-bisphosphate + ADP + H(+). It carries out the reaction D-glycero-beta-D-manno-heptose 1-phosphate + ATP + H(+) = ADP-D-glycero-beta-D-manno-heptose + diphosphate. It participates in nucleotide-sugar biosynthesis; ADP-L-glycero-beta-D-manno-heptose biosynthesis; ADP-L-glycero-beta-D-manno-heptose from D-glycero-beta-D-manno-heptose 7-phosphate: step 1/4. Its pathway is nucleotide-sugar biosynthesis; ADP-L-glycero-beta-D-manno-heptose biosynthesis; ADP-L-glycero-beta-D-manno-heptose from D-glycero-beta-D-manno-heptose 7-phosphate: step 3/4. Functionally, catalyzes the phosphorylation of D-glycero-D-manno-heptose 7-phosphate at the C-1 position to selectively form D-glycero-beta-D-manno-heptose-1,7-bisphosphate. In terms of biological role, catalyzes the ADP transfer from ATP to D-glycero-beta-D-manno-heptose 1-phosphate, yielding ADP-D-glycero-beta-D-manno-heptose. The sequence is that of Bifunctional protein HldE from Trichlorobacter lovleyi (strain ATCC BAA-1151 / DSM 17278 / SZ) (Geobacter lovleyi).